Reading from the N-terminus, the 352-residue chain is UDP-N-acetylglucosamine--N-acetylmuramyl-(pentapeptide) pyrophosphoryl-undecaprenol N-acetylglucosamine transferase (352 aa).

UDP-N-acetyl-alpha-D-glucosamine contacts are provided by S195 and Q287.

It belongs to the glycosyltransferase 28 family. MurG subfamily.

It localises to the cell membrane. The catalysed reaction is Mur2Ac(oyl-L-Ala-gamma-D-Glu-L-Lys-D-Ala-D-Ala)-di-trans,octa-cis-undecaprenyl diphosphate + UDP-N-acetyl-alpha-D-glucosamine = beta-D-GlcNAc-(1-&gt;4)-Mur2Ac(oyl-L-Ala-gamma-D-Glu-L-Lys-D-Ala-D-Ala)-di-trans,octa-cis-undecaprenyl diphosphate + UDP + H(+). The protein operates within cell wall biogenesis; peptidoglycan biosynthesis. In terms of biological role, cell wall formation. Catalyzes the transfer of a GlcNAc subunit on undecaprenyl-pyrophosphoryl-MurNAc-pentapeptide (lipid intermediate I) to form undecaprenyl-pyrophosphoryl-MurNAc-(pentapeptide)GlcNAc (lipid intermediate II). The sequence is that of UDP-N-acetylglucosamine--N-acetylmuramyl-(pentapeptide) pyrophosphoryl-undecaprenol N-acetylglucosamine transferase from Streptococcus pneumoniae (strain CGSP14).